Reading from the N-terminus, the 200-residue chain is Endoribonuclease YbeY (200 aa).

Pro residues predominate over residues 1–18 (MPADPALPDPVPPGPTAP). The segment at 1–22 (MPADPALPDPVPPGPTAPVPTD) is disordered. Positions 151, 155, and 161 each coordinate Zn(2+).

It belongs to the endoribonuclease YbeY family. It depends on Zn(2+) as a cofactor.

The protein localises to the cytoplasm. Functionally, single strand-specific metallo-endoribonuclease involved in late-stage 70S ribosome quality control and in maturation of the 3' terminus of the 16S rRNA. The protein is Endoribonuclease YbeY of Rhodospirillum rubrum (strain ATCC 11170 / ATH 1.1.1 / DSM 467 / LMG 4362 / NCIMB 8255 / S1).